Here is a 105-residue protein sequence, read N- to C-terminus: Putative membrane protein insertion efficiency factor (105 aa).

Belongs to the UPF0161 family.

Its subcellular location is the cell membrane. Its function is as follows. Could be involved in insertion of integral membrane proteins into the membrane. The sequence is that of Putative membrane protein insertion efficiency factor from Bifidobacterium longum subsp. infantis (strain ATCC 15697 / DSM 20088 / JCM 1222 / NCTC 11817 / S12).